A 370-amino-acid polypeptide reads, in one-letter code: tRNA/tmRNA (uracil-C(5))-methyltransferase (370 aa).

5 residues coordinate S-adenosyl-L-methionine: Q195, Y221, N226, E242, and D302. C327 functions as the Nucleophile in the catalytic mechanism. E361 (proton acceptor) is an active-site residue.

It belongs to the class I-like SAM-binding methyltransferase superfamily. RNA M5U methyltransferase family. TrmA subfamily.

It carries out the reaction uridine(54) in tRNA + S-adenosyl-L-methionine = 5-methyluridine(54) in tRNA + S-adenosyl-L-homocysteine + H(+). The enzyme catalyses uridine(341) in tmRNA + S-adenosyl-L-methionine = 5-methyluridine(341) in tmRNA + S-adenosyl-L-homocysteine + H(+). Its function is as follows. Dual-specificity methyltransferase that catalyzes the formation of 5-methyluridine at position 54 (m5U54) in all tRNAs, and that of position 341 (m5U341) in tmRNA (transfer-mRNA). This Wolinella succinogenes (strain ATCC 29543 / DSM 1740 / CCUG 13145 / JCM 31913 / LMG 7466 / NCTC 11488 / FDC 602W) (Vibrio succinogenes) protein is tRNA/tmRNA (uracil-C(5))-methyltransferase.